Here is a 556-residue protein sequence, read N- to C-terminus: Protein misato homolog 1 (556 aa).

Ser-41 is modified (phosphoserine).

It belongs to the misato family.

Its subcellular location is the mitochondrion outer membrane. The protein localises to the cytoplasm. Involved in the regulation of mitochondrial distribution and morphology. Required for mitochondrial fusion and mitochondrial network formation. In Mus musculus (Mouse), this protein is Protein misato homolog 1 (Msto1).